The primary structure comprises 166 residues: MAIKLEDKKAIVAEVNEAAKAGLSAVVADARGVTVGAMTGLRKEAREAGVYVKVVRNTLLKRAVEGTQFDVLNDVFKGPTLIAFSNEHPGAAARLFKEFAKGQDKFEIKAAAFEGKYLAANQIDVLASLPTRDEGIAQLMSVIQGATSKLARTLAAIRDQKEAAAA.

Belongs to the universal ribosomal protein uL10 family. Part of the ribosomal stalk of the 50S ribosomal subunit. The N-terminus interacts with L11 and the large rRNA to form the base of the stalk. The C-terminus forms an elongated spine to which L12 dimers bind in a sequential fashion forming a multimeric L10(L12)X complex.

Functionally, forms part of the ribosomal stalk, playing a central role in the interaction of the ribosome with GTP-bound translation factors. The sequence is that of Large ribosomal subunit protein uL10 from Ectopseudomonas mendocina (strain ymp) (Pseudomonas mendocina).